We begin with the raw amino-acid sequence, 22 residues long: Hemoglobinase-like protein 2 (22 aa).

It belongs to the peptidase C13 family.

It catalyses the reaction Hydrolysis of proteins and small molecule substrates at -Asn-|-Xaa- bonds.. This chain is Hemoglobinase-like protein 2, found in Fasciola hepatica (Liver fluke).